We begin with the raw amino-acid sequence, 320 residues long: Coproporphyrin III ferrochelatase (320 aa).

Positions 194 and 273 each coordinate Fe(2+).

Belongs to the ferrochelatase family.

It localises to the cytoplasm. It catalyses the reaction Fe-coproporphyrin III + 2 H(+) = coproporphyrin III + Fe(2+). It functions in the pathway porphyrin-containing compound metabolism; protoheme biosynthesis. Involved in coproporphyrin-dependent heme b biosynthesis. Catalyzes the insertion of ferrous iron into coproporphyrin III to form Fe-coproporphyrin III. The chain is Coproporphyrin III ferrochelatase from Symbiobacterium thermophilum (strain DSM 24528 / JCM 14929 / IAM 14863 / T).